A 122-amino-acid polypeptide reads, in one-letter code: Ig heavy chain V region M511 (122 aa).

The region spanning 1–114 (EVKLVESGGG…SYWYFDVWGA (114 aa)) is the Ig-like domain.

The chain is Ig heavy chain V region M511 from Mus musculus (Mouse).